We begin with the raw amino-acid sequence, 221 residues long: Peptide methionine sulfoxide reductase MsrA (221 aa).

Cys54 is a catalytic residue.

This sequence belongs to the MsrA Met sulfoxide reductase family.

It catalyses the reaction L-methionyl-[protein] + [thioredoxin]-disulfide + H2O = L-methionyl-(S)-S-oxide-[protein] + [thioredoxin]-dithiol. It carries out the reaction [thioredoxin]-disulfide + L-methionine + H2O = L-methionine (S)-S-oxide + [thioredoxin]-dithiol. Functionally, has an important function as a repair enzyme for proteins that have been inactivated by oxidation. Catalyzes the reversible oxidation-reduction of methionine sulfoxide in proteins to methionine. The polypeptide is Peptide methionine sulfoxide reductase MsrA (Methylobacterium nodulans (strain LMG 21967 / CNCM I-2342 / ORS 2060)).